The primary structure comprises 192 residues: Probable apo-citrate lyase phosphoribosyl-dephospho-CoA transferase (192 aa).

The protein belongs to the CitX family.

It catalyses the reaction apo-[citrate lyase ACP] + 2'-(5''-triphospho-alpha-D-ribosyl)-3'-dephospho-CoA = holo-[citrate lyase ACP] + diphosphate. Transfers 2-(5''-triphosphoribosyl)-3'-dephosphocoenzyme-A on a serine residue to the apo-acyl carrier protein (gamma chain) of the citrate lyase to yield holo-acyl carrier protein. The protein is Probable apo-citrate lyase phosphoribosyl-dephospho-CoA transferase of Streptococcus pyogenes serotype M3 (strain ATCC BAA-595 / MGAS315).